Here is a 166-residue protein sequence, read N- to C-terminus: uncharacterized protein (166 aa).

The protein to C.perfringens pCP13 PCP12.

This is an uncharacterized protein from Clostridium perfringens.